Here is a 56-residue protein sequence, read N- to C-terminus: Small ribosomal subunit protein uS14 (56 aa).

Residues Cys-21, Cys-24, Cys-39, and Cys-42 each contribute to the Zn(2+) site.

Belongs to the universal ribosomal protein uS14 family. In terms of assembly, component of the 40S small ribosomal subunit. It depends on Zn(2+) as a cofactor.

The protein resides in the cytoplasm. It is found in the cytosol. It localises to the rough endoplasmic reticulum. In Bombyx mori (Silk moth), this protein is Small ribosomal subunit protein uS14 (RpS29).